A 151-amino-acid polypeptide reads, in one-letter code: Large ribosomal subunit protein uL15 (151 aa).

Positions 1-60 (MAENNPLKIHNLRPAPGAKTAKTRVGRGEASKGKTAGRGTKGTKARYQVPERFEGGQMPL) are disordered.

It belongs to the universal ribosomal protein uL15 family. As to quaternary structure, part of the 50S ribosomal subunit.

Its function is as follows. Binds to the 23S rRNA. This chain is Large ribosomal subunit protein uL15, found in Streptomyces avermitilis (strain ATCC 31267 / DSM 46492 / JCM 5070 / NBRC 14893 / NCIMB 12804 / NRRL 8165 / MA-4680).